A 224-amino-acid polypeptide reads, in one-letter code: MTNLLLQGVGMTSLRTRERLIQRLRDQGVTNLRVLDIMLNTPRHLFLDEALAHRAYEDTALPIGHGQTLSQPYIVARMTELLLGAAGKLNKVLEVGTGSGYQTSLLAQLVPEVYTVERIKPLQDKARERLHQLGLRNIRYRHADGGFGWPDMGAYDGILSTAAPQVVPDELLKQLAPGGVLVIPVGGREQQLHLIIRDTEDTEKFVTQILEPVKFVPFLSGTAR.

Ser70 is an active-site residue.

This sequence belongs to the methyltransferase superfamily. L-isoaspartyl/D-aspartyl protein methyltransferase family.

Its subcellular location is the cytoplasm. It catalyses the reaction [protein]-L-isoaspartate + S-adenosyl-L-methionine = [protein]-L-isoaspartate alpha-methyl ester + S-adenosyl-L-homocysteine. Functionally, catalyzes the methyl esterification of L-isoaspartyl residues in peptides and proteins that result from spontaneous decomposition of normal L-aspartyl and L-asparaginyl residues. It plays a role in the repair and/or degradation of damaged proteins. The polypeptide is Protein-L-isoaspartate O-methyltransferase (Cellvibrio japonicus (strain Ueda107) (Pseudomonas fluorescens subsp. cellulosa)).